The sequence spans 142 residues: MEPLLIQDVLKTLPHRFPFVLVDRVLSAQDGEVHALKNVTVNEPFFPGHFPQEPVMPGVLIVEALAQASMFCLHGQLEPGTVGYLAGVEGARFKRKVIPGDQLHLYAKLDFLRRGLGKTTCRAEVDGQVAAEATILFAVAKG.

Residue histidine 49 is part of the active site.

The protein belongs to the thioester dehydratase family. FabZ subfamily.

It localises to the cytoplasm. It catalyses the reaction a (3R)-hydroxyacyl-[ACP] = a (2E)-enoyl-[ACP] + H2O. Involved in unsaturated fatty acids biosynthesis. Catalyzes the dehydration of short chain beta-hydroxyacyl-ACPs and long chain saturated and unsaturated beta-hydroxyacyl-ACPs. The sequence is that of 3-hydroxyacyl-[acyl-carrier-protein] dehydratase FabZ from Deinococcus geothermalis (strain DSM 11300 / CIP 105573 / AG-3a).